Here is a 551-residue protein sequence, read N- to C-terminus: Tetrachloroethene reductive dehalogenase (551 aa).

Residues Met1–Ala39 constitute a signal peptide (tat-type signal). A 4Fe-4S ferredoxin-type 1 domain is found at Pro411 to Asp440. [4Fe-4S] cluster-binding residues include Cys420, Cys423, Cys426, Cys430, Cys467, Cys478, Cys481, and Cys485. The 4Fe-4S ferredoxin-type 2 domain maps to Cys478–Asp496.

It belongs to the PceA family. Monomer. Requires [4Fe-4S] cluster as cofactor. It depends on corrinoid as a cofactor. Post-translationally, predicted to be exported by the Tat system. The position of the signal peptide cleavage has been experimentally proven.

The protein resides in the cell membrane. The catalysed reaction is trichloroethene + chloride + A + H(+) = tetrachloroethene + AH2. The enzyme catalyses trichloroethene + AH2 = (Z)-1,2-dichloroethene + chloride + A + H(+). Its activity is regulated as follows. Activity is inhibited by ammonium ions. Photoreversibly inactivated by 1-iodopropane. Its function is as follows. Catalyzes the reductive dechlorination of tetrachloroethene (PCE) to trichloroethene (TCE) and of trichloroethene to cis-1,2-dichloroethene (DCE). Can also use trichlorofluoroethene, tetrachloromethane, hexachloroethane, tetrachloroethane, trichloroethane and 1,1,1-trichloro-2,2,2-trifluoroethane. Menaquinone can act as the electron donor. Reduced methyl viologen can act as the artificial electron donor. The chain is Tetrachloroethene reductive dehalogenase from Dehalobacter restrictus (strain DSM 9455 / PER-K23).